We begin with the raw amino-acid sequence, 189 residues long: Photosystem I assembly protein Ycf4 (189 aa).

The next 2 membrane-spanning stretches (helical) occupy residues 29–49 and 69–89; these read WATIVTLGASGFLLAGISSYL and LVMGLYGAAGLLLATYLWLVI.

Belongs to the Ycf4 family.

Its subcellular location is the cellular thylakoid membrane. Functionally, seems to be required for the assembly of the photosystem I complex. This is Photosystem I assembly protein Ycf4 from Nostoc punctiforme (strain ATCC 29133 / PCC 73102).